We begin with the raw amino-acid sequence, 166 residues long: Small ribosomal subunit protein uS5 (166 aa).

An S5 DRBM domain is found at 12-75; that stretch reads YIEKLVQVNR…EAARRNMIQV (64 aa).

This sequence belongs to the universal ribosomal protein uS5 family. In terms of assembly, part of the 30S ribosomal subunit. Contacts proteins S4 and S8.

Functionally, with S4 and S12 plays an important role in translational accuracy. In terms of biological role, located at the back of the 30S subunit body where it stabilizes the conformation of the head with respect to the body. This Pseudomonas savastanoi pv. phaseolicola (strain 1448A / Race 6) (Pseudomonas syringae pv. phaseolicola (strain 1448A / Race 6)) protein is Small ribosomal subunit protein uS5.